The chain runs to 434 residues: MSILKIHAREIFDSRGNPTVEVDLYTNKGLFRAAVPSGASTGIYEALELRDNDKTRYMGKGVSKAVEHINKTIAPALISKNVNVVEQDKIDKLMLDMDGSENKSKFGANAILGVSLAVCKAGAAEKGVPLYRHIADLAGNPEVILPVPAFNVINGGSHAGNKLAMQEFMIPPCGADSFKEAMRIGAEVYHNLKNVIKEKYGKDATNVGDEGGFAPNILENKEALELLKTAIGKAGYSDKVVIGMDVAASEFYRDGKYDLDFKSPDDPSRYISPDQLADLYKGFVKNYPVVSIEDPFDQDDWGAWKKFTGSVGIQVVGDDLTVTNPKRIAKAVEEKACNCLLLKVNQIGSVTESLQACKLAQSNGWGVMVSHRSGETEDTFIADLVVGLCTGQIKTGAPCRSERLAKYNQLLRIEEELGSKARFAGRNFRNPRIN.

Mg(2+) is bound at residue serine 40. Positions 158 and 167 each coordinate substrate. Catalysis depends on glutamate 210, which acts as the Proton donor. Mg(2+) contacts are provided by aspartate 245, glutamate 293, and aspartate 318. Residues glutamate 293 and aspartate 318 each contribute to the substrate site. Lysine 343 acts as the Proton acceptor in catalysis. Residues 370-373 and lysine 394 contribute to the substrate site; that span reads SHRS.

The protein belongs to the enolase family. In terms of assembly, homodimer. Mg(2+) is required as a cofactor.

The protein localises to the cytoplasm. The catalysed reaction is (2R)-2-phosphoglycerate = phosphoenolpyruvate + H2O. It participates in carbohydrate degradation; glycolysis; pyruvate from D-glyceraldehyde 3-phosphate: step 4/5. In terms of biological role, both an enzyme and a lens structural protein. The polypeptide is Alpha-enolase (ENO1) (Anas platyrhynchos (Mallard)).